A 237-amino-acid polypeptide reads, in one-letter code: Ras modification protein ERF4 (237 aa).

It belongs to the ERF4 family. As to quaternary structure, interacts with ERF2.

It localises to the endoplasmic reticulum membrane. Its function is as follows. The ERF2-SHR5 complex is a palmitoyltransferase specific for Ras proteins. Palmitoylates RAS2, which is required for its proper plasma membrane localization. In Saccharomyces cerevisiae (strain ATCC 204508 / S288c) (Baker's yeast), this protein is Ras modification protein ERF4 (SHR5).